A 148-amino-acid chain; its full sequence is MANIVYFSSVSENTHRFVQKLELPAIRIPLKDRIRVEEPYVLILPTYGGGHANGPDPDRGGYVPKQVIAFLNDEHNRSLIRGVIAAGNTNFGAEFGYAGVVVSRKCDVPFLYRFELMGTTDDVFAVRAGLQDFWKDQSCPQPSQLQNR.

Belongs to the NrdI family.

Its function is as follows. Probably involved in ribonucleotide reductase function. This chain is Protein NrdI, found in Mycolicibacterium gilvum (strain PYR-GCK) (Mycobacterium gilvum (strain PYR-GCK)).